A 64-amino-acid chain; its full sequence is Large ribosomal subunit protein bL35 (64 aa).

This sequence belongs to the bacterial ribosomal protein bL35 family.

The protein is Large ribosomal subunit protein bL35 of Shewanella oneidensis (strain ATCC 700550 / JCM 31522 / CIP 106686 / LMG 19005 / NCIMB 14063 / MR-1).